Here is a 937-residue protein sequence, read N- to C-terminus: MPPRAPPAPGPRPPPRAAGRHGLSPLAPRPWRWLLLLALPAVCSALPPPRPVYTNHWAVQVLGGPGAADRVAAAHGYLNLGQIGNLDDYYHFYHSKTFKRSTLSSRGPHTFLRMDPQVKWLQQQEVKRRVKRQARSDSLYFNDPIWSNMWYMHCADKNSRCRSEMNVQAAWKRGYTGKNVVVTILDDGIERNHPDLAPNYDSYASYDVNGNDYDPSPRYDASNENKHGTRCAGEVAASANNSYCIVGIAYNAKIGGIRMLDGDVTDVVEAKSLGIRPNYIDIYSASWGPDDDGKTVDGPGRLAKQAFEYGIKKGRQGLGSIFVWASGNGGREGDHCSCDGYTNSIYTISVSSTTENGHKPWYLEECASTLATTYSSGAFYERKIVTTDLRQRCTDGHTGTSVSAPMVAGIIALALEANNQLTWRDVQHLLVKTSRPAHLKASDWKVNGAGHKVSHLYGFGLVDAEALVLEARKWTAVPSQHMCVATADKRPRSIPVVQVLRTTALTNACADHSDQRVVYLEHVVVRISISHPRRGDLQIHLISPSGTKSQLLAKRLLDFSNEGFTNWEFMTVHCWGEKAEGEWTLEVQDIPSQVRNPEKQGKLKEWSLILYGTAEHPYRTFSSHQSRSRMLELSVPEQEPLKAEGPPPQAETPEEEEEYTGVCHPECGDKGCDGPSADQCLNCVHFSLGNSKTNRKCVSECPLGYFGDTAARRCRRCHKGCETCTGRSPTQCLSCRRGFYHHQETNTCVTLCPAGLYADESQRLCLRCHPSCQKCVDEPEKSTVCKEGFSLARGSCIPDCEPGTYFDSELIRCGECHHTCRTCVGPSREECIHCAKSFHFQDWKCVPACGEGFYPEEMPGLPHKVCRRCDENCLSCEGSSRNCSRCKAGFTQLGTSCITNHTCSNADETFCEMVKSNRLCERKLFIQFCCRTCLLAG.

The segment covering 1–16 has biased composition (pro residues); sequence MPPRAPPAPGPRPPPR. The disordered stretch occupies residues 1-22; sequence MPPRAPPAPGPRPPPRAAGRHG. Residues 1-45 form the signal peptide; it reads MPPRAPPAPGPRPPPRAAGRHGLSPLAPRPWRWLLLLALPAVCSA. Positions 46–132 are excised as a propeptide; the sequence is LPPPRPVYTN…QQEVKRRVKR (87 aa). The region spanning 149-468 is the Peptidase S8 domain; sequence MWYMHCADKN…FGLVDAEALV (320 aa). Active-site charge relay system residues include D186 and H227. A glycan (N-linked (GlcNAc...) asparagine) is linked at N240. Residue S401 is the Charge relay system of the active site. Residues 476–616 form the P/Homo B domain; that stretch reads AVPSQHMCVA…SLILYGTAEH (141 aa). The Cell attachment site signature appears at 534–536; that stretch reads RGD. The segment at 621–656 is disordered; it reads FSSHQSRSRMLELSVPEQEPLKAEGPPPQAETPEEE. 5 FU repeats span residues 660–707, 711–758, 762–806, 810–855, and 863–911; these read TGVC…GYFG, ARRC…GLYA, QRLC…GTYF, LIRC…GFYP, and HKVC…ETFC. Residues 680-898 are CRM (Cys-rich motif); the sequence is CLNCVHFSLG…GFTQLGTSCI (219 aa). Residues N882 and N900 are each glycosylated (N-linked (GlcNAc...) asparagine). One can recognise a PLAC domain in the interval 899–937; the sequence is TNHTCSNADETFCEMVKSNRLCERKLFIQFCCRTCLLAG.

The protein belongs to the peptidase S8 family. As to quaternary structure, the precursor protein seems to exist in the reticulum endoplasmic as both a monomer and a dimer-sized complex whereas mature form exists only as a monomer, suggesting that propeptide cleavage affects its tertiary or quaternary structure. Interacts (immature form including the propeptide) with RCN3; probably involved in the maturation and the secretion of PCSK6. It depends on Ca(2+) as a cofactor. High expression in the anterior pituitary and in several brain regions, the atrium, and the ventricle.

Functionally, serine endoprotease that processes various proproteins by cleavage at paired basic amino acids, recognizing the RXXX[KR]R consensus motif. Likely functions in the constitutive secretory pathway, with unique restricted distribution in both neuroendocrine and non-neuroendocrine tissues. The polypeptide is Proprotein convertase subtilisin/kexin type 6 (Pcsk6) (Rattus norvegicus (Rat)).